We begin with the raw amino-acid sequence, 175 residues long: MSKVKKNEEALSEVLVDVNRVTKVVKGGRRFAFSAYVVVGDKAGRVGAGHGKAKEVNEARGKAKQAAKKRMMKVPLYQNRTIHHDVVGKSGAAKVILRRAKAGTGVIAGGSMRAIFDSLGVHDIVAKSIGSTNVYAMISATFDALNKLASPKSIAIRRGKKVHEISVKSYIQVNK.

Residues 11–74 (LSEVLVDVNR…QAAKKRMMKV (64 aa)) form the S5 DRBM domain.

Belongs to the universal ribosomal protein uS5 family. As to quaternary structure, part of the 30S ribosomal subunit. Contacts proteins S4 and S8.

Functionally, with S4 and S12 plays an important role in translational accuracy. In terms of biological role, located at the back of the 30S subunit body where it stabilizes the conformation of the head with respect to the body. This Rickettsia typhi (strain ATCC VR-144 / Wilmington) protein is Small ribosomal subunit protein uS5.